The sequence spans 220 residues: 7-cyano-7-deazaguanine synthase (220 aa).

Position 10–20 (10–20 (FSGGQDSTTCL)) interacts with ATP. 4 residues coordinate Zn(2+): Cys-186, Cys-195, Cys-198, and Cys-201.

Belongs to the QueC family. Homodimer. Zn(2+) is required as a cofactor.

It carries out the reaction 7-carboxy-7-deazaguanine + NH4(+) + ATP = 7-cyano-7-deazaguanine + ADP + phosphate + H2O + H(+). Its pathway is purine metabolism; 7-cyano-7-deazaguanine biosynthesis. Functionally, catalyzes the ATP-dependent conversion of 7-carboxy-7-deazaguanine (CDG) to 7-cyano-7-deazaguanine (preQ(0)). The polypeptide is 7-cyano-7-deazaguanine synthase (Bacillus cereus (strain AH187)).